The primary structure comprises 138 residues: Transcription antitermination protein NusB (138 aa).

It belongs to the NusB family.

Functionally, involved in transcription antitermination. Required for transcription of ribosomal RNA (rRNA) genes. Binds specifically to the boxA antiterminator sequence of the ribosomal RNA (rrn) operons. In Desulforudis audaxviator (strain MP104C), this protein is Transcription antitermination protein NusB.